The sequence spans 119 residues: Protein TusC (119 aa).

Belongs to the DsrF/TusC family. In terms of assembly, heterohexamer, formed by a dimer of trimers. The hexameric TusBCD complex contains 2 copies each of TusB, TusC and TusD. The TusBCD complex interacts with TusE.

The protein localises to the cytoplasm. Part of a sulfur-relay system required for 2-thiolation of 5-methylaminomethyl-2-thiouridine (mnm(5)s(2)U) at tRNA wobble positions. In Buchnera aphidicola subsp. Acyrthosiphon pisum (strain 5A), this protein is Protein TusC.